We begin with the raw amino-acid sequence, 360 residues long: Protein OSB4, chloroplastic (360 aa).

The transit peptide at 1 to 61 directs the protein to the chloroplast; sequence MQFLGRSISK…AEKSSEEWPR (61 aa). The tract at residues 28-64 is disordered; sequence SQQFLSTSSTESSSRTRGGGGGNRAEKSSEEWPRPME. Over residues 33 to 43 the composition is skewed to low complexity; the sequence is STSSTESSSRT. The span at 51 to 61 shows a compositional bias: basic and acidic residues; it reads RAEKSSEEWPR. The region spanning 71 to 188 is the SSB domain; that stretch reads IANSIDLIGY…VMVRDLHYIE (118 aa). PDF region regions lie at residues 224 to 276 and 296 to 344; these read WFDL…SELK and WKDL…EKLP.

The protein resides in the plastid. Its subcellular location is the chloroplast. Binds single-stranded DNA. In Arabidopsis thaliana (Mouse-ear cress), this protein is Protein OSB4, chloroplastic (OSB4).